The sequence spans 702 residues: Elongation factor G (702 aa).

Residues aspartate 8 to leucine 286 enclose the tr-type G domain. GTP-binding positions include alanine 17–threonine 24, aspartate 85–histidine 89, and asparagine 139–aspartate 142.

This sequence belongs to the TRAFAC class translation factor GTPase superfamily. Classic translation factor GTPase family. EF-G/EF-2 subfamily.

It localises to the cytoplasm. Catalyzes the GTP-dependent ribosomal translocation step during translation elongation. During this step, the ribosome changes from the pre-translocational (PRE) to the post-translocational (POST) state as the newly formed A-site-bound peptidyl-tRNA and P-site-bound deacylated tRNA move to the P and E sites, respectively. Catalyzes the coordinated movement of the two tRNA molecules, the mRNA and conformational changes in the ribosome. The protein is Elongation factor G of Chloroflexus aggregans (strain MD-66 / DSM 9485).